The sequence spans 472 residues: Glutamyl-tRNA(Gln) amidotransferase subunit A (472 aa).

Residues Lys69 and Ser144 each act as charge relay system in the active site. The Acyl-ester intermediate role is filled by Ser168.

The protein belongs to the amidase family. GatA subfamily. Heterotrimer of A, B and C subunits.

The catalysed reaction is L-glutamyl-tRNA(Gln) + L-glutamine + ATP + H2O = L-glutaminyl-tRNA(Gln) + L-glutamate + ADP + phosphate + H(+). Functionally, allows the formation of correctly charged Gln-tRNA(Gln) through the transamidation of misacylated Glu-tRNA(Gln) in organisms which lack glutaminyl-tRNA synthetase. The reaction takes place in the presence of glutamine and ATP through an activated gamma-phospho-Glu-tRNA(Gln). In Sulfurisphaera tokodaii (strain DSM 16993 / JCM 10545 / NBRC 100140 / 7) (Sulfolobus tokodaii), this protein is Glutamyl-tRNA(Gln) amidotransferase subunit A.